The chain runs to 131 residues: MAGIKALISLSFGGAIGLMFLMLGCALPIYNQYWPLFVLFFYILSPIPYCIARRLVDDTDAMSNACKELAIFLTTGIVVSAFGLPVVFARAHLIEWGACALVLTGNTVIFATILGFFLVFGSNDDFSWQQW.

4 helical membrane passes run 7–27 (LISL…GCAL), 32–52 (QYWP…YCIA), 69–89 (LAIF…VVFA), and 100–120 (ALVL…FLVF).

This sequence belongs to the OB-RGRP/VPS55 family. Interacts with RAB13.

Its subcellular location is the membrane. In terms of biological role, negatively regulates growth hormone (GH) receptor cell surface expression in liver. May play a role in liver resistance to GH during periods of reduced nutrient availability. The polypeptide is Leptin receptor overlapping transcript-like 1 (Leprotl1) (Mus musculus (Mouse)).